We begin with the raw amino-acid sequence, 467 residues long: MHSTTPISSLFSFTSPAVKRLLGWKQGDEEEKWAEKAVDSLVKKLKKKKGAMDELERALSCPGQPSKCVTIPRSLDGRLQVSHRKGLPHVIYCRVWRWPDLQSHHELKPLECCEFPFGSKQKEVCINPYHYRRVETPVLPPVLVPRHSEYNPQLSLLAKFRSASLHSEPLMPHNATYPDSFQQPPCSALPPSPSHAFSQSPCTASYPHSPGSPSEPESPYQHSVDTPPLPYHATEASETQSGQPVDATADRHVVLSIPNGDFRPVCYEEPQHWCSVAYYELNNRVGETFQASSRSVLIDGFTDPSNNRNRFCLGLLSNVNRNSTIENTRRHIGKGVHLYYVGGEVYAECVSDSSIFVQSRNCNYQHGFHPATVCKIPSGCSLKVFNNQLFAQLLAQSVHHGFEVVYELTKMCTIRMSFVKGWGAEYHRQDVTSTPCWIEIHLHGPLQWLDKVLTQMGSPHNPISSVS.

Residues 16–140 form the MH1 domain; it reads PAVKRLLGWK…YRRVETPVLP (125 aa). 4 residues coordinate Zn(2+): Cys-68, Cys-113, Cys-125, and His-130. The tract at residues 174–246 is disordered; the sequence is NATYPDSFQQ…SETQSGQPVD (73 aa). Residues 205-220 show a composition bias toward low complexity; sequence SYPHSPGSPSEPESPY. The 195-residue stretch at 273–467 folds into the MH2 domain; the sequence is WCSVAYYELN…SPHNPISSVS (195 aa).

Belongs to the dwarfin/SMAD family. Interaction with the co-SMAD SMAD4. Interacts with PEBP2-alpha subunit. Interacts with RANBP3L. Phosphorylated on serine by BMP (bone morphogenetic proteins) type 1 receptor kinase. In terms of tissue distribution, expressed in heart, brain, placenta, lung, skeletal muscle, prostate, testis, ovary and small intestine. Also expressed in fetal brain, lung and kidney.

The protein localises to the cytoplasm. It localises to the nucleus. In terms of biological role, transcriptional modulator activated by BMP (bone morphogenetic proteins) type 1 receptor kinase. SMAD9 is a receptor-regulated SMAD (R-SMAD). This Homo sapiens (Human) protein is Mothers against decapentaplegic homolog 9 (SMAD9).